The sequence spans 409 residues: uncharacterized protein (409 aa).

Transmembrane regions (helical) follow at residues 62–82 (FSLG…WVWI), 100–120 (LLLF…PEAF), 123–143 (MGLL…LFAL), 152–172 (ASFM…TFWI), 183–203 (VVLW…RYWV), 252–272 (GTPW…WIYF), 293–313 (AQYL…FTAV), 328–348 (YNFA…TMWM), 355–375 (VLPY…TLVP), and 376–396 (FVAN…VAVW).

It localises to the cell membrane. This is an uncharacterized protein from Rhizobium meliloti (strain 1021) (Ensifer meliloti).